The primary structure comprises 300 residues: GTPase Era (300 aa).

The region spanning 7 to 175 is the Era-type G domain; sequence KSGFAVMAGL…KTAVAETLPF (169 aa). The segment at 15-22 is G1; that stretch reads GLPNAGKS. 15–22 is a GTP binding site; it reads GLPNAGKS. A G2 region spans residues 41-45; it reads QMTRQ. Residues 62-65 form a G3 region; it reads DTPG. GTP-binding positions include 62–66 and 124–127; these read DTPGF and NKAD. Residues 124–127 form a G4 region; it reads NKAD. Positions 154–156 are G5; sequence ISA. One can recognise a KH type-2 domain in the interval 198-283; the sequence is IREQIFNLYE…RLELEVSVEP (86 aa).

This sequence belongs to the TRAFAC class TrmE-Era-EngA-EngB-Septin-like GTPase superfamily. Era GTPase family. Monomer.

It is found in the cytoplasm. The protein resides in the cell inner membrane. An essential GTPase that binds both GDP and GTP, with rapid nucleotide exchange. Plays a role in 16S rRNA processing and 30S ribosomal subunit biogenesis and possibly also in cell cycle regulation and energy metabolism. The polypeptide is GTPase Era (Elusimicrobium minutum (strain Pei191)).